Reading from the N-terminus, the 522-residue chain is Serine/threonine protein phosphatase 2A 59 kDa regulatory subunit B' gamma isoform (522 aa).

The disordered stretch occupies residues 1–74 (MIKQIFGKLP…SSTSSNRTNQ (74 aa)). Low complexity predominate over residues 35 to 58 (PNSGISSISKPSSKSSASNSNGAN). Residues 63–74 (APSSTSSNRTNQ) are compositionally biased toward polar residues.

Belongs to the phosphatase 2A regulatory subunit B56 family. PP2A consists of a common heteromeric enzyme, composed of a catalytic subunit (subunits C), a constant regulatory subunit (subunit A), and a variety of regulatory subunits such as subunits B (the R2/B/PR55/B55, R3/B''/PR72/PR130/PR59 and R5/B'/B56 families). Interacts with BRI1. Interacts with IGMT1 and IGMT4. Interacts with ACO3 in the cytosol. As to expression, expressed ubiquitously at low levels. Expressed in roots, emerging lateral roots, cotyledons, leaves, floral stalks and flowers.

Its subcellular location is the cytoplasm. It is found in the cytosol. It localises to the nucleus. In terms of biological role, the B regulatory subunit may modulate substrate selectivity and catalytic activity, and may also direct the localization of the catalytic enzyme to a particular subcellular compartment. Required for the formation of the PP2A holoenzyme that negatively regulates brassinosteroid signaling by dephosphorylating and inactivating BRI1 in the cytoplasm. Seems to be functionally connected with CPR5 and may mediate the negative regulation of defense reactions and senescence under low irradiances. May contribute to the epigenetic regulation of defense gene expression. Involved in the control of methoxylation of indole glucosinolates and formation of 4-methoxy- indol-3-yl-methyl glucosinolate in leaves, through direct interaction with indole glucosinolate methyltransferases. Involved in growth regulation and stress signaling. Involved in the regulation of reactive oxygen species (ROS) signaling and maintenance of cellular ROS homeostasis. Required to control the level of ACO3 phosphorylation in the cytoplasm. Regulates hydrogen peroxide metabolism by controlling the abundance of AOX1A and AXO3/AOX1D in leaf mitochondria. May mediate dephosphorylation of CRT1 and promote the degradation of unfolded proteins in endoplasmic reticulum (ER). Involved in the regulation of flowering time by repressing FLC, the main flowering repressor gene. In Arabidopsis thaliana (Mouse-ear cress), this protein is Serine/threonine protein phosphatase 2A 59 kDa regulatory subunit B' gamma isoform (B'GAMMA).